The primary structure comprises 40 residues: Unknown protein from spot 207 of 2D-PAGE of etiolated coleoptile (40 aa).

Belongs to the GST superfamily. HSP26 family.

The sequence is that of Unknown protein from spot 207 of 2D-PAGE of etiolated coleoptile from Zea mays (Maize).